The primary structure comprises 717 residues: DNA ligase (717 aa).

Residues 44–48 (DAEYD), 93–94 (SL), and Glu-127 each bind NAD(+). Lys-129 acts as the N6-AMP-lysine intermediate in catalysis. The NAD(+) site is built by Arg-150, Glu-186, Lys-302, and Lys-326. Zn(2+)-binding residues include Cys-431, Cys-434, Cys-455, and Cys-461. The 79-residue stretch at 639–717 (TSGSPVVGKT…EDEWLELIGG (79 aa)) folds into the BRCT domain.

The protein belongs to the NAD-dependent DNA ligase family. LigA subfamily. It depends on Mg(2+) as a cofactor. The cofactor is Mn(2+).

It carries out the reaction NAD(+) + (deoxyribonucleotide)n-3'-hydroxyl + 5'-phospho-(deoxyribonucleotide)m = (deoxyribonucleotide)n+m + AMP + beta-nicotinamide D-nucleotide.. Functionally, DNA ligase that catalyzes the formation of phosphodiester linkages between 5'-phosphoryl and 3'-hydroxyl groups in double-stranded DNA using NAD as a coenzyme and as the energy source for the reaction. It is essential for DNA replication and repair of damaged DNA. The chain is DNA ligase from Rhizobium rhizogenes (strain K84 / ATCC BAA-868) (Agrobacterium radiobacter).